We begin with the raw amino-acid sequence, 1170 residues long: Anion exchange protein 3 (1170 aa).

At 1–656 (MGRSYNEKDF…DLKDALDTQC (656 aa)) the chain is on the cytoplasmic side. Disordered regions lie at residues 17 to 96 (FHHT…PQLS), 112 to 167 (FHME…TTRG), and 239 to 267 (HLVKKSSRCQLPRSSNGSPPLSSLKRRKR). Residues 32–53 (RFRKRVLSMDRRRKRKRKKKKT) show a composition bias toward basic residues. Residues 67–76 (VDEEEAESEI) are compositionally biased toward acidic residues. Polar residues predominate over residues 246-259 (RCQLPRSSNGSPPL). 5 consecutive transmembrane segments (helical) span residues 657-677 (IAAVIFIYFAALSPTITFGGL), 702-722 (FSLLAGQPLLIIGFSGPLLVF), 744-764 (IGFWLIFIVLVIVAAEGSFLV), 774-794 (IFAFLISLIFIYETFSKLIKV), and 828-848 (PNTALLSMVLMMGTFFTAFFL). Residues 657-1170 (IAAVIFIYFA…DEYNEIHMLV (514 aa)) are membrane (anion exchange). Over 849–863 (RKLRNSRFLGGKVRR) the chain is Cytoplasmic. Helical transmembrane passes span 864-884 (VIGDFGIPISILISVLVDILI), 919-939 (FPVWMMGASVIPALLVFILIF), 966-986 (LLLIVTLGAICPLFGLPWLTA), 1020-1063 (RVTG…LTGI), and 1104-1124 (IVLLWVVKSTVASLAFPFILI).

This sequence belongs to the anion exchanger (TC 2.A.31) family. In terms of tissue distribution, widely expressed at low levels.

The protein localises to the cell membrane. It carries out the reaction hydrogencarbonate(in) + chloride(out) = hydrogencarbonate(out) + chloride(in). Sodium-independent anion exchanger which mediates the electroneutral exchange of chloride for bicarbonate ions across the cell membrane. May be involved in the regulation of intracellular pH, and the modulation of cardiac action potential. The sequence is that of Anion exchange protein 3 from Danio rerio (Zebrafish).